Here is a 290-residue protein sequence, read N- to C-terminus: GTPase Era (290 aa).

The Era-type G domain occupies 2–167 (KSGFVSIVGR…LDELVKYLPE (166 aa)). The interval 10–17 (GRTNAGKS) is G1. A GTP-binding site is contributed by 10–17 (GRTNAGKS). Positions 36–40 (NATRR) are G2. A G3 region spans residues 57-60 (DTPG). GTP contacts are provided by residues 57–61 (DTPGL) and 116–119 (NKVD). A G4 region spans residues 116 to 119 (NKVD). The interval 146-148 (YSI) is G5. The region spanning 194-274 (IYENLSDEIP…MLKLFVQLEK (81 aa)) is the KH type-2 domain.

It belongs to the TRAFAC class TrmE-Era-EngA-EngB-Septin-like GTPase superfamily. Era GTPase family. In terms of assembly, monomer.

The protein resides in the cytoplasm. It is found in the cell inner membrane. In terms of biological role, an essential GTPase that binds both GDP and GTP, with rapid nucleotide exchange. Plays a role in 16S rRNA processing and 30S ribosomal subunit biogenesis and possibly also in cell cycle regulation and energy metabolism. This chain is GTPase Era, found in Campylobacter lari (strain RM2100 / D67 / ATCC BAA-1060).